The primary structure comprises 239 residues: UDP-2,3-diacylglucosamine hydrolase (239 aa).

Residues aspartate 9, histidine 11, aspartate 42, asparagine 80, and histidine 115 each contribute to the Mn(2+) site. Residue 80 to 81 (NR) coordinates substrate. The substrate site is built by aspartate 123, serine 161, lysine 165, lysine 168, and histidine 196. Mn(2+) contacts are provided by histidine 196 and histidine 198.

Belongs to the LpxH family. Mn(2+) serves as cofactor.

Its subcellular location is the cell inner membrane. It carries out the reaction UDP-2-N,3-O-bis[(3R)-3-hydroxytetradecanoyl]-alpha-D-glucosamine + H2O = 2-N,3-O-bis[(3R)-3-hydroxytetradecanoyl]-alpha-D-glucosaminyl 1-phosphate + UMP + 2 H(+). It functions in the pathway glycolipid biosynthesis; lipid IV(A) biosynthesis; lipid IV(A) from (3R)-3-hydroxytetradecanoyl-[acyl-carrier-protein] and UDP-N-acetyl-alpha-D-glucosamine: step 4/6. In terms of biological role, hydrolyzes the pyrophosphate bond of UDP-2,3-diacylglucosamine to yield 2,3-diacylglucosamine 1-phosphate (lipid X) and UMP by catalyzing the attack of water at the alpha-P atom. Involved in the biosynthesis of lipid A, a phosphorylated glycolipid that anchors the lipopolysaccharide to the outer membrane of the cell. The chain is UDP-2,3-diacylglucosamine hydrolase from Pasteurella multocida (strain Pm70).